We begin with the raw amino-acid sequence, 317 residues long: Melanocyte-stimulating hormone receptor (317 aa).

Residues 1-37 are Extracellular-facing; the sequence is MPMQEPQRRLLGPFNSTRTGAPHLELSANQTGPWCLH. 2 N-linked (GlcNAc...) asparagine glycosylation sites follow: Asn15 and Asn29. A helical transmembrane segment spans residues 38–63; that stretch reads VSIPDGLFLSLGLVSLVENVLVVISI. Residues 64–72 are Cytoplasmic-facing; sequence AKNQNLHSP. A helical membrane pass occupies residues 73 to 93; that stretch reads MYYFICCLALSDLLVSVSIVL. Residues 94–118 lie on the Extracellular side of the membrane; the sequence is ETTLILVLEAGALATRVTVVQQLDN. The helical transmembrane segment at 119 to 140 threads the bilayer; the sequence is VIDVLICASMVSSLCFLGAIAV. Topologically, residues 141-163 are cytoplasmic; sequence DRYISIFYALRYHSIVTLPRARW. A helical membrane pass occupies residues 164–183; that stretch reads AIVAIWVASISSSTLFVAYY. At 184 to 191 the chain is on the extracellular side; that stretch reads NHTAVLLC. Residues 192 to 211 traverse the membrane as a helical segment; the sequence is LVTFFLATLALMVVLYVHML. Over 212-240 the chain is Cytoplasmic; it reads ARAHQHAQAIAQLHKRQHLVHQGFRLKGA. A helical membrane pass occupies residues 241–266; the sequence is ATLTILLGIFFLCWGPFFLYLTLIVL. Residues 267–279 lie on the Extracellular side of the membrane; the sequence is CPKHPTCGCFFKN. Residues 280 to 300 traverse the membrane as a helical segment; the sequence is LNLFLALIIFNSIVDPLIYAF. Residues 301–317 are Cytoplasmic-facing; sequence RSQELRMTLKEVLLCSW. A lipid anchor (S-palmitoyl cysteine) is attached at Cys315.

The protein belongs to the G-protein coupled receptor 1 family. As to quaternary structure, interacts with MGRN1, but does not undergo MGRN1-mediated ubiquitination; this interaction competes with GNAS-binding and thus inhibits agonist-induced cAMP production. Interacts with OPN3; the interaction results in a decrease in MC1R-mediated cAMP signaling and ultimately a decrease in melanin production in melanocytes.

The protein localises to the cell membrane. Functionally, receptor for MSH (alpha, beta and gamma) and ACTH. The activity of this receptor is mediated by G proteins which activate adenylate cyclase. Mediates melanogenesis, the production of eumelanin (black/brown) and phaeomelanin (red/yellow), via regulation of cAMP signaling in melanocytes. This chain is Melanocyte-stimulating hormone receptor (MC1R), found in Chaetodipus penicillatus (Desert pocket mouse).